We begin with the raw amino-acid sequence, 1350 residues long: uncharacterized protein (1350 aa).

Disordered regions lie at residues 348-371 (SLVG…LDDS) and 923-944 (SKME…RGTG). Basic and acidic residues predominate over residues 923 to 932 (SKMEGGERDA).

This is an uncharacterized protein from Ictalurid herpesvirus 1 (strain Auburn) (IcHV-1).